The chain runs to 296 residues: tRNA dimethylallyltransferase (296 aa).

2-9 (GPTASGKT) is an ATP binding site. Position 4 to 9 (4 to 9 (TASGKT)) interacts with substrate. Interaction with substrate tRNA stretches follow at residues 27–30 (DSAL), 151–155 (QRLSR), and 232–237 (RCVGYR).

It belongs to the IPP transferase family. Monomer. Mg(2+) is required as a cofactor.

It carries out the reaction adenosine(37) in tRNA + dimethylallyl diphosphate = N(6)-dimethylallyladenosine(37) in tRNA + diphosphate. In terms of biological role, catalyzes the transfer of a dimethylallyl group onto the adenine at position 37 in tRNAs that read codons beginning with uridine, leading to the formation of N6-(dimethylallyl)adenosine (i(6)A). This is tRNA dimethylallyltransferase from Shewanella baltica (strain OS155 / ATCC BAA-1091).